Reading from the N-terminus, the 129-residue chain is Arsenate-mycothiol transferase ArsC2 (129 aa).

It belongs to the low molecular weight phosphotyrosine protein phosphatase family.

Its subcellular location is the cytoplasm. It carries out the reaction mycothiol + arsenate = arseno-mycothiol + H2O. Functionally, involved in defense against toxic arsenate. Involved in the mycothiol/myoredoxin redox pathway which uses a mycothioltransferase mechanism; facilitates adduct formation between arsenate and mycothiol. The polypeptide is Arsenate-mycothiol transferase ArsC2 (arsC2) (Corynebacterium glutamicum (strain ATCC 13032 / K051)).